A 466-amino-acid chain; its full sequence is ATP synthase subunit beta (466 aa).

Position 148-155 (148-155 (GGAGVGKT)) interacts with ATP.

Belongs to the ATPase alpha/beta chains family. F-type ATPases have 2 components, CF(1) - the catalytic core - and CF(0) - the membrane proton channel. CF(1) has five subunits: alpha(3), beta(3), gamma(1), delta(1), epsilon(1). CF(0) has three main subunits: a(1), b(2) and c(9-12). The alpha and beta chains form an alternating ring which encloses part of the gamma chain. CF(1) is attached to CF(0) by a central stalk formed by the gamma and epsilon chains, while a peripheral stalk is formed by the delta and b chains.

It localises to the cell inner membrane. It catalyses the reaction ATP + H2O + 4 H(+)(in) = ADP + phosphate + 5 H(+)(out). In terms of biological role, produces ATP from ADP in the presence of a proton gradient across the membrane. The catalytic sites are hosted primarily by the beta subunits. The sequence is that of ATP synthase subunit beta from Xylella fastidiosa (strain 9a5c).